The chain runs to 202 residues: 3-isopropylmalate dehydratase small subunit (202 aa).

Belongs to the LeuD family. LeuD type 1 subfamily. As to quaternary structure, heterodimer of LeuC and LeuD.

The enzyme catalyses (2R,3S)-3-isopropylmalate = (2S)-2-isopropylmalate. Its pathway is amino-acid biosynthesis; L-leucine biosynthesis; L-leucine from 3-methyl-2-oxobutanoate: step 2/4. Catalyzes the isomerization between 2-isopropylmalate and 3-isopropylmalate, via the formation of 2-isopropylmaleate. The polypeptide is 3-isopropylmalate dehydratase small subunit (Blochmanniella pennsylvanica (strain BPEN)).